Reading from the N-terminus, the 417-residue chain is Cyanophycinase (417 aa).

An N-terminal signal peptide occupies residues Met-1–Ala-23. Catalysis depends on charge relay system residues Ser-169, Asp-188, and His-222.

The protein belongs to the peptidase S51 family.

It localises to the secreted. It catalyses the reaction [L-4-(L-arginin-2-N-yl)aspartate](n) + H2O = [L-4-(L-arginin-2-N-yl)aspartate](n-1) + L-4-(L-arginin-2-N-yl)aspartate. With respect to regulation, inhibited by serine protease inhibitors. Inhibited by N-Bromo-succinimide. Functionally, exopeptidase that catalyzes the hydrolytic cleavage of multi-L-arginyl-poly-L-aspartic acid (cyanophycin; a water-insoluble reserve polymer) into aspartate-arginine dipeptides. This is Cyanophycinase (cphE) from Pseudomonas anguilliseptica.